The chain runs to 480 residues: tRNA (guanine(37)-N(1))-methyltransferase (480 aa).

Residues 1–18 (MAAVWRRSARLFILLQRH) constitute a mitochondrion transit peptide. Residues His-273, 311 to 312 (DL), 339 to 340 (DG), and Asn-367 each bind S-adenosyl-L-methionine. A disordered region spans residues 458-480 (HTQDRDTSEEPCPKKQKCEDSTN).

Belongs to the class I-like SAM-binding methyltransferase superfamily. TRM5/TYW2 family. As to quaternary structure, monomer.

The protein localises to the mitochondrion matrix. Its subcellular location is the nucleus. The protein resides in the cytoplasm. It catalyses the reaction guanosine(37) in tRNA + S-adenosyl-L-methionine = N(1)-methylguanosine(37) in tRNA + S-adenosyl-L-homocysteine + H(+). Functionally, involved in mitochondrial tRNA methylation. Specifically methylates the N1 position of guanosine-37 in various tRNAs. Methylation is not dependent on the nature of the nucleoside 5' of the target nucleoside. This is the first step in the biosynthesis of wybutosine (yW), a modified base adjacent to the anticodon of tRNAs and required for accurate decoding. The polypeptide is tRNA (guanine(37)-N(1))-methyltransferase (trmt5) (Danio rerio (Zebrafish)).